Reading from the N-terminus, the 305-residue chain is Aspartate carbamoyltransferase catalytic subunit (305 aa).

Arg-56 and Thr-57 together coordinate carbamoyl phosphate. Lys-85 is an L-aspartate binding site. 3 residues coordinate carbamoyl phosphate: Arg-106, His-134, and Gln-137. L-aspartate is bound by residues Arg-167 and Arg-227. Positions 266 and 267 each coordinate carbamoyl phosphate.

Belongs to the aspartate/ornithine carbamoyltransferase superfamily. ATCase family. In terms of assembly, heterooligomer of catalytic and regulatory chains.

The enzyme catalyses carbamoyl phosphate + L-aspartate = N-carbamoyl-L-aspartate + phosphate + H(+). Its pathway is pyrimidine metabolism; UMP biosynthesis via de novo pathway; (S)-dihydroorotate from bicarbonate: step 2/3. Catalyzes the condensation of carbamoyl phosphate and aspartate to form carbamoyl aspartate and inorganic phosphate, the committed step in the de novo pyrimidine nucleotide biosynthesis pathway. The sequence is that of Aspartate carbamoyltransferase catalytic subunit from Thermoplasma volcanium (strain ATCC 51530 / DSM 4299 / JCM 9571 / NBRC 15438 / GSS1).